Consider the following 541-residue polypeptide: Glucose-6-phosphate isomerase (541 aa).

The active-site Proton donor is glutamate 346. Residues histidine 377 and lysine 506 contribute to the active site.

The protein belongs to the GPI family.

The protein localises to the cytoplasm. The enzyme catalyses alpha-D-glucose 6-phosphate = beta-D-fructose 6-phosphate. Its pathway is carbohydrate biosynthesis; gluconeogenesis. It functions in the pathway carbohydrate degradation; glycolysis; D-glyceraldehyde 3-phosphate and glycerone phosphate from D-glucose: step 2/4. Catalyzes the reversible isomerization of glucose-6-phosphate to fructose-6-phosphate. This Rhizobium rhizogenes (strain K84 / ATCC BAA-868) (Agrobacterium radiobacter) protein is Glucose-6-phosphate isomerase.